The sequence spans 156 residues: Ribosomal RNA large subunit methyltransferase H (156 aa).

S-adenosyl-L-methionine contacts are provided by residues L73, G104, and 123–128 (ISSMTL).

The protein belongs to the RNA methyltransferase RlmH family. Homodimer.

It localises to the cytoplasm. The catalysed reaction is pseudouridine(1915) in 23S rRNA + S-adenosyl-L-methionine = N(3)-methylpseudouridine(1915) in 23S rRNA + S-adenosyl-L-homocysteine + H(+). Its function is as follows. Specifically methylates the pseudouridine at position 1915 (m3Psi1915) in 23S rRNA. This is Ribosomal RNA large subunit methyltransferase H from Janthinobacterium sp. (strain Marseille) (Minibacterium massiliensis).